Here is a 185-residue protein sequence, read N- to C-terminus: Elongation factor P (185 aa).

This sequence belongs to the elongation factor P family.

Its subcellular location is the cytoplasm. It functions in the pathway protein biosynthesis; polypeptide chain elongation. Functionally, involved in peptide bond synthesis. Stimulates efficient translation and peptide-bond synthesis on native or reconstituted 70S ribosomes in vitro. Probably functions indirectly by altering the affinity of the ribosome for aminoacyl-tRNA, thus increasing their reactivity as acceptors for peptidyl transferase. The polypeptide is Elongation factor P (Clostridium novyi (strain NT)).